The sequence spans 464 residues: Glutamate--tRNA ligase 1 (464 aa).

The 'HIGH' region motif lies at 8–18 (PSPTGHLHVGG). Positions 231–235 (PLSKR) match the 'KMSKS' region motif. Lys-234 serves as a coordination point for ATP.

This sequence belongs to the class-I aminoacyl-tRNA synthetase family. Glutamate--tRNA ligase type 1 subfamily. As to quaternary structure, monomer.

It is found in the cytoplasm. It carries out the reaction tRNA(Glu) + L-glutamate + ATP = L-glutamyl-tRNA(Glu) + AMP + diphosphate. Its function is as follows. Catalyzes the attachment of glutamate to tRNA(Glu) in a two-step reaction: glutamate is first activated by ATP to form Glu-AMP and then transferred to the acceptor end of tRNA(Glu). In Thermotoga petrophila (strain ATCC BAA-488 / DSM 13995 / JCM 10881 / RKU-1), this protein is Glutamate--tRNA ligase 1.